The following is a 66-amino-acid chain: uncharacterized protein (66 aa).

The protein belongs to the YeeT/YkfH/YpjJ family.

This is an uncharacterized protein from Escherichia coli (strain K12).